The sequence spans 1402 residues: DNA-directed RNA polymerase subunit beta' (1402 aa).

4 residues coordinate Zn(2+): Cys-72, Cys-74, Cys-87, and Cys-90. Mg(2+) is bound by residues Asp-463, Asp-465, and Asp-467. The Zn(2+) site is built by Cys-811, Cys-885, Cys-892, and Cys-895.

It belongs to the RNA polymerase beta' chain family. As to quaternary structure, the RNAP catalytic core consists of 2 alpha, 1 beta, 1 beta' and 1 omega subunit. When a sigma factor is associated with the core the holoenzyme is formed, which can initiate transcription. Mg(2+) serves as cofactor. It depends on Zn(2+) as a cofactor.

It carries out the reaction RNA(n) + a ribonucleoside 5'-triphosphate = RNA(n+1) + diphosphate. Its function is as follows. DNA-dependent RNA polymerase catalyzes the transcription of DNA into RNA using the four ribonucleoside triphosphates as substrates. The protein is DNA-directed RNA polymerase subunit beta' of Paracoccus denitrificans (strain Pd 1222).